A 132-amino-acid chain; its full sequence is Ribosome-binding factor A (132 aa).

The protein belongs to the RbfA family. As to quaternary structure, monomer. Binds 30S ribosomal subunits, but not 50S ribosomal subunits or 70S ribosomes.

It is found in the cytoplasm. Functionally, one of several proteins that assist in the late maturation steps of the functional core of the 30S ribosomal subunit. Associates with free 30S ribosomal subunits (but not with 30S subunits that are part of 70S ribosomes or polysomes). Required for efficient processing of 16S rRNA. May interact with the 5'-terminal helix region of 16S rRNA. The polypeptide is Ribosome-binding factor A (Bordetella avium (strain 197N)).